The sequence spans 147 residues: UPF0735 ACT domain-containing protein BPUM_2431 (147 aa).

The ACT domain occupies 70–145; sequence TLFFHLEDRS…FVEKVEILGS (76 aa).

This sequence belongs to the UPF0735 family.

The polypeptide is UPF0735 ACT domain-containing protein BPUM_2431 (Bacillus pumilus (strain SAFR-032)).